Reading from the N-terminus, the 325-residue chain is Aldo-keto reductase family 1 member A1 (325 aa).

Residue Thr-2 is modified to N-acetylthreonine. Ser-4 carries the phosphoserine modification. NADP(+)-binding positions include 11–20 (GQKMPLIGLG), Thr-21, and Trp-22. An N-linked (Glc) (glycation) lysine glycan is attached at Lys-23. Phosphoserine is present on Ser-38. Asp-45 is an NADP(+) binding site. Tyr-50 functions as the Proton donor in the catalytic mechanism. Lys-68 and Lys-85 each carry an N-linked (Glc) (glycation) lysine glycan. At Lys-127 the chain carries N6-acetyllysine; alternate. At Lys-127 the chain carries N6-succinyllysine; alternate. N-linked (Glc) (glycation) lysine glycosylation is present at Lys-141. Lys-145 is subject to N6-succinyllysine. Lys-153 carries N-linked (Glc) (glycation) lysine glycosylation. The NADP(+) site is built by Ser-162, Asn-163, Ser-211, Leu-213, Ser-215, Ser-216, Lys-263, Ser-264, Ile-265, Thr-266, Arg-269, Gln-272, and Asn-273. Position 211 is a phosphoserine (Ser-211).

It belongs to the aldo/keto reductase family. As to quaternary structure, monomer. In terms of tissue distribution, widely expressed.

The protein resides in the cytoplasm. The protein localises to the cytosol. Its subcellular location is the apical cell membrane. It catalyses the reaction a primary alcohol + NADP(+) = an aldehyde + NADPH + H(+). It carries out the reaction L-gulonate + NADP(+) = aldehydo-D-glucuronate + NADPH + H(+). The catalysed reaction is L-gulono-1,4-lactone + NADP(+) = D-glucurono-3,6-lactone + NADPH + H(+). The enzyme catalyses allyl alcohol + NADP(+) = acrolein + NADPH + H(+). It catalyses the reaction glycerol + NADP(+) = D-glyceraldehyde + NADPH + H(+). It carries out the reaction glycerol + NADP(+) = L-glyceraldehyde + NADPH + H(+). The catalysed reaction is hydroxyacetone + NADP(+) = methylglyoxal + NADPH + H(+). The enzyme catalyses 3-deoxyfructose + NADP(+) = 3-deoxyglucosone + NADPH + H(+). It catalyses the reaction (R)-mevalonate + NADP(+) = (R)-mevaldate + NADPH + H(+). It carries out the reaction pyridine 3-methanol + NADP(+) = pyridine-3-carbaldehyde + NADPH + H(+). The catalysed reaction is S-nitroso-CoA + NADPH + H(+) = sulfinamide-CoA + NADP(+). The enzyme catalyses S-nitrosoglutathione + NADPH + H(+) = S-(hydroxysulfenamide)glutathione + NADP(+). Functionally, catalyzes the NADPH-dependent reduction of a wide variety of carbonyl-containing compounds to their corresponding alcohols. Displays enzymatic activity towards endogenous metabolites such as aromatic and aliphatic aldehydes, ketones, monosaccharides and bile acids. Plays an important role in ascorbic acid biosynthesis by catalyzing the reduction of D-glucuronic acid and D-glucurono-gamma-lactone. Functions as a detoxifiying enzyme by reducing a range of toxic aldehydes. Reduces methylglyoxal and 3-deoxyglucosone, which are present at elevated levels under hyperglycemic conditions and are cytotoxic. Involved also in the detoxification of lipid-derived aldehydes like acrolein. Plays a role in the activation of procarcinogens, such as polycyclic aromatic hydrocarbon trans-dihydrodiols, and in the metabolism of various xenobiotics and drugs. Also acts as an inhibitor of protein S-nitrosylation by mediating degradation of S-nitroso-coenzyme A (S-nitroso-CoA), a cofactor required to S-nitrosylate proteins. S-nitroso-CoA reductase activity is involved in reprogramming intermediary metabolism in renal proximal tubules, notably by inhibiting protein S-nitrosylation of isoform 2 of PKM (PKM2). Also acts as a S-nitroso-glutathione reductase by catalyzing the NADPH-dependent reduction of S-nitrosoglutathione. Displays no reductase activity towards retinoids. The chain is Aldo-keto reductase family 1 member A1 (Akr1a1) from Rattus norvegicus (Rat).